The sequence spans 137 residues: SMR2 protein (137 aa).

The N-terminal stretch at Met-1–Asn-18 is a signal peptide. Positions Ser-14 to Gln-113 are disordered. The segment covering Gln-75–Gln-85 has biased composition (low complexity). Over residues Pro-99–Leu-110 the composition is skewed to basic and acidic residues.

The protein localises to the secreted. Its function is as follows. Unknown, male-specific function. In Rattus norvegicus (Rat), this protein is SMR2 protein (Smr2).